The sequence spans 184 residues: MEAPGVLLVMGVSGSGKSTVGALLASKLGWKFYDADDYHSEENRIKMAKGVPLSDQDRIPWLCTLHDILLRDVALGQPVVLACSALKKTYRDILIRGGSDAPLKSDDSAKEPLAGGKLLVVYLCGSFDIIYGRLLQRKGHFMPPELLQSQFSILEPPSAPENFIQVSVDKSLPEITAAVMEALK.

11–18 contributes to the ATP binding site; that stretch reads GVSGSGKS.

The protein belongs to the gluconokinase GntK/GntV family.

It catalyses the reaction D-gluconate + ATP = 6-phospho-D-gluconate + ADP + H(+). It functions in the pathway carbohydrate acid metabolism; D-gluconate degradation. In Mus musculus (Mouse), this protein is Probable gluconokinase (Idnk).